The chain runs to 367 residues: MYLEVSERQVLDASDIAFLLENSTSPYDYGENESDFSDSPPCPQDFSLNFDRTFLPVLYSLLFLLGLLGNGAVAAVLLSQRTALSSTDTFLLHLAVADVLLVLTLPLWAVDAAAQWVFGSGLCKVAGALFNINFYAGAFLLACISFDRYLSIVHATQIYRRDPWVRVALTCIVVWGLCVLFALPDFIFLSASHDQRLNATHCQYNFPQVGRTALRVLQLVAGFLMPLLVMAYCYAHILAVLLVSRGQRRFRAMRLVVVVVVAFAVCWTPYHLVVLVDILMDVGVLARNCGRESHVDVAKSVTSGMGYMHCCLNPLLYAFVGVKFKEQMWMLLMRLGRSDQRGPQRQPSSSRRESSWSETTEASYLGL.

Over 1-56 the chain is Extracellular; the sequence is MYLEVSERQVLDASDIAFLLENSTSPYDYGENESDFSDSPPCPQDFSLNFDRTFLP. Asparagine 22 is a glycosylation site (N-linked (GlcNAc...) asparagine). Residues tyrosine 27 and tyrosine 29 each carry the sulfotyrosine modification. A glycan (N-linked (GlcNAc...) asparagine) is linked at asparagine 32. Residues 57–77 form a helical membrane-spanning segment; it reads VLYSLLFLLGLLGNGAVAAVL. Over 78–89 the chain is Cytoplasmic; it reads LSQRTALSSTDT. A helical membrane pass occupies residues 90–110; that stretch reads FLLHLAVADVLLVLTLPLWAV. Residues 111–125 lie on the Extracellular side of the membrane; it reads DAAAQWVFGSGLCKV. Cysteines 123 and 202 form a disulfide. A helical transmembrane segment spans residues 126–146; the sequence is AGALFNINFYAGAFLLACISF. Residues 147–168 lie on the Cytoplasmic side of the membrane; that stretch reads DRYLSIVHATQIYRRDPWVRVA. The chain crosses the membrane as a helical span at residues 169-189; sequence LTCIVVWGLCVLFALPDFIFL. Residues 190–222 are Extracellular-facing; sequence SASHDQRLNATHCQYNFPQVGRTALRVLQLVAG. N-linked (GlcNAc...) asparagine glycosylation occurs at asparagine 198. Residues 223–243 form a helical membrane-spanning segment; it reads FLMPLLVMAYCYAHILAVLLV. Over 244 to 255 the chain is Cytoplasmic; the sequence is SRGQRRFRAMRL. A helical transmembrane segment spans residues 256–276; it reads VVVVVVAFAVCWTPYHLVVLV. The Extracellular portion of the chain corresponds to 277 to 300; sequence DILMDVGVLARNCGRESHVDVAKS. Residues 301-321 traverse the membrane as a helical segment; that stretch reads VTSGMGYMHCCLNPLLYAFVG. The Cytoplasmic segment spans residues 322–367; sequence VKFKEQMWMLLMRLGRSDQRGPQRQPSSSRRESSWSETTEASYLGL. The disordered stretch occupies residues 339 to 367; the sequence is DQRGPQRQPSSSRRESSWSETTEASYLGL.

Belongs to the G-protein coupled receptor 1 family. As to quaternary structure, homomer. Forms heteromers with ACKR4. Interacts with PF4/CXCL4. Post-translationally, sulfation on Tyr-27 and Tyr-29 is essential for CXCL10 binding. In terms of processing, N-glycosylated.

The protein resides in the cell membrane. Its function is as follows. Receptor for the C-X-C chemokine CXCL9, CXCL10 and CXCL11 and mediates the proliferation, survival and angiogenic activity of mesangial cells through a heterotrimeric G-protein signaling pathway. Probably promotes cell chemotaxis response. Binds to CCL21. Upon activation by PF4, induces activated T-lymphocytes migration mediated via downstream Ras/extracellular signal-regulated kinase (ERK) signaling. This chain is C-X-C chemokine receptor type 3 (Cxcr3), found in Rattus norvegicus (Rat).